The following is a 154-amino-acid chain: Ribosomal RNA large subunit methyltransferase H (154 aa).

Positions 71 and 103 each coordinate S-adenosyl-L-methionine.

The protein belongs to the RNA methyltransferase RlmH family. In terms of assembly, homodimer.

It localises to the cytoplasm. The catalysed reaction is pseudouridine(1915) in 23S rRNA + S-adenosyl-L-methionine = N(3)-methylpseudouridine(1915) in 23S rRNA + S-adenosyl-L-homocysteine + H(+). Specifically methylates the pseudouridine at position 1915 (m3Psi1915) in 23S rRNA. In Solidesulfovibrio magneticus (strain ATCC 700980 / DSM 13731 / RS-1) (Desulfovibrio magneticus), this protein is Ribosomal RNA large subunit methyltransferase H.